The primary structure comprises 200 residues: Prostamide/prostaglandin F synthase (200 aa).

Belongs to the peroxiredoxin-like PRXL2 family. Prostamide/prostaglandin F synthase subfamily.

It is found in the cytoplasm. The protein resides in the cytosol. It carries out the reaction prostaglandin H2 + [thioredoxin]-dithiol = prostaglandin F2alpha + [thioredoxin]-disulfide. The catalysed reaction is prostamide F2alpha + [thioredoxin]-disulfide = prostamide H2 + [thioredoxin]-dithiol. Functionally, catalyzes the reduction of prostaglandin-ethanolamide H(2) (prostamide H(2)) to prostamide F(2alpha) with NADPH as proton donor. Also able to reduce prostaglandin H(2) to prostaglandin F(2alpha). This Salmo salar (Atlantic salmon) protein is Prostamide/prostaglandin F synthase (prxl2b).